A 236-amino-acid polypeptide reads, in one-letter code: MKFSAILTALTATIATVAGYETSGKPHTVDILIDYSIKETPEISQTDVANWVNGQKYTLEYVVNNNEETEIAVVGVTGQFKNPVTNQIVTNLTTGQVGPIAVAPGESIKFEQIVDVDLIPDNYELIPHVFVAHDDLIKVIPCRGQLASIVDAAVSFFDPRLIFLELVLLATFGGIAYFVYEIWGKQYLRGTAPVKVPVKKSGSPVAVKEASPVGSASGFDESWIPEAHLKKNKKKA.

The N-terminal stretch at methionine 1–glycine 19 is a signal peptide. Residues tyrosine 20 to leucine 161 lie on the Lumenal side of the membrane. The chain crosses the membrane as a helical span at residues isoleucine 162–isoleucine 182. At tryptophan 183–alanine 236 the chain is on the cytoplasmic side.

Belongs to the IRC22 family.

The protein localises to the endoplasmic reticulum membrane. Is probably involved in a pathway contributing to genomic integrity. This is Increased recombination centers protein 22-2 (IRC22-2) from Candida tropicalis (strain ATCC MYA-3404 / T1) (Yeast).